We begin with the raw amino-acid sequence, 90 residues long: Cell division topological specificity factor (90 aa).

Residues 1-21 are disordered; the sequence is MAGFWSKLFSSEEKPSSAQTA. Residues 10–21 show a composition bias toward basic and acidic residues; sequence SSEEKPSSAQTA.

It belongs to the MinE family.

Its function is as follows. Prevents the cell division inhibition by proteins MinC and MinD at internal division sites while permitting inhibition at polar sites. This ensures cell division at the proper site by restricting the formation of a division septum at the midpoint of the long axis of the cell. This Acinetobacter baumannii (strain AB307-0294) protein is Cell division topological specificity factor.